A 108-amino-acid chain; its full sequence is MKFKKNDEVIVIAGKDKGTVGRIEKILVKENKVIIKDVNMVTKHNKPSQQNQEGNLTSVEAPIHVSNVAYLVKKASKSSAAVYSKLGRVTNKDGKKVRLVKKTKKEIQ.

It belongs to the universal ribosomal protein uL24 family. As to quaternary structure, part of the 50S ribosomal subunit.

One of two assembly initiator proteins, it binds directly to the 5'-end of the 23S rRNA, where it nucleates assembly of the 50S subunit. Its function is as follows. One of the proteins that surrounds the polypeptide exit tunnel on the outside of the subunit. This Mycoplasmopsis synoviae (strain 53) (Mycoplasma synoviae) protein is Large ribosomal subunit protein uL24.